Here is a 291-residue protein sequence, read N- to C-terminus: Putative ribosomal protein uL16-like, mitochondrial (291 aa).

The transit peptide at 1–27 (MQRFMFSRVVEHQRQISRGFLSLVPSL) directs the protein to the mitochondrion. Basic and acidic residues predominate over residues 127-137 (VHETSNNEKKQ). Residues 127–173 (VHETSNNEKKQQKQKSSVNEKKPKKKKKSSISDIPRRTKFQKHHRGR) are disordered. A compositionally biased stretch (basic residues) spans 163 to 173 (RTKFQKHHRGR).

This sequence belongs to the universal ribosomal protein uL16 family.

The protein resides in the mitochondrion. Its function is as follows. Could be a component of the large subunit of mitochondrial ribosome. This is Putative ribosomal protein uL16-like, mitochondrial from Arabidopsis thaliana (Mouse-ear cress).